Here is a 305-residue protein sequence, read N- to C-terminus: Ornithine carbamoyltransferase (305 aa).

Carbamoyl phosphate contacts are provided by residues 50 to 53 (STRT), glutamine 77, arginine 101, and 128 to 131 (HPCQ). Residues asparagine 162, aspartate 220, and 224-225 (SM) each bind L-ornithine. Carbamoyl phosphate-binding positions include 260 to 261 (CL) and arginine 288.

It belongs to the aspartate/ornithine carbamoyltransferase superfamily. OTCase family.

The protein localises to the cytoplasm. It catalyses the reaction carbamoyl phosphate + L-ornithine = L-citrulline + phosphate + H(+). It functions in the pathway amino-acid degradation; L-arginine degradation via ADI pathway; carbamoyl phosphate from L-arginine: step 2/2. Its function is as follows. Reversibly catalyzes the transfer of the carbamoyl group from carbamoyl phosphate (CP) to the N(epsilon) atom of ornithine (ORN) to produce L-citrulline. The protein is Ornithine carbamoyltransferase of Akkermansia muciniphila (strain ATCC BAA-835 / DSM 22959 / JCM 33894 / BCRC 81048 / CCUG 64013 / CIP 107961 / Muc).